We begin with the raw amino-acid sequence, 451 residues long: L,D-transpeptidase 5 (451 aa).

The region spanning 263–384 (QVVKAEVSSH…AVYGDPVEVT (122 aa)) is the L,D-TPase catalytic domain. Residues tyrosine 323 and 337-338 (NG) contribute to the substrate site. The active-site Proton donor/acceptor is histidine 342. The active-site Nucleophile is the cysteine 360. Residue asparagine 362 coordinates substrate. The disordered stretch occupies residues 417–451 (AAKPAATQIPVTAPVTPSDAPTPSGTPTTTNGPGG). The segment covering 437–451 (PTPSGTPTTTNGPGG) has biased composition (low complexity).

Its pathway is cell wall biogenesis; peptidoglycan biosynthesis. In contrast to other LDT paralogs, LdtMt5 is not inactivated by the beta-lactam carbapenems; beta-lactam carbapenems form covalent adducts with other LDT paralogs but the formation of covalent adducts was not detected for LdtMt5. Its function is as follows. Generates 3-&gt;3 cross-links in peptidoglycan, catalyzing the cleavage of the mDap(3)-D-Ala(4) bond of a tetrapeptide donor stem and the formation of a bond between the carbonyl of mDap(3) of the donor stem and the side chain of mDap(3) of the acceptor stem. Is specific for donor substrates containing a stem tetrapeptide since it cannot use pentapeptide stems. This is L,D-transpeptidase 5 (lprQ) from Mycobacterium tuberculosis (strain ATCC 25618 / H37Rv).